Consider the following 428-residue polypeptide: uncharacterized protein (428 aa).

The next 10 helical transmembrane spans lie at 26–46 (VALT…DDVF), 51–71 (AGID…VSVL), 90–110 (AAPL…SALL), 135–155 (TPFL…TLVG), 177–197 (MAPA…WLLG), 223–243 (LLIK…AHPV), 278–298 (TLLF…TGVV), 314–334 (LLTV…IDNI), 359–379 (TFWW…AVAA), and 407–427 (VVTA…YFVF).

Belongs to the CitM (TC 2.A.11) transporter family.

Its subcellular location is the cell membrane. This is an uncharacterized protein from Mycobacterium tuberculosis (strain CDC 1551 / Oshkosh).